The following is a 238-amino-acid chain: Hydroxyacylglutathione hydrolase (238 aa).

Zn(2+) contacts are provided by His-52, His-54, Asp-56, His-57, His-108, Asp-125, and His-163.

This sequence belongs to the metallo-beta-lactamase superfamily. Glyoxalase II family. Monomer. Zn(2+) serves as cofactor.

The enzyme catalyses an S-(2-hydroxyacyl)glutathione + H2O = a 2-hydroxy carboxylate + glutathione + H(+). It functions in the pathway secondary metabolite metabolism; methylglyoxal degradation; (R)-lactate from methylglyoxal: step 2/2. Its function is as follows. Thiolesterase that catalyzes the hydrolysis of S-D-lactoyl-glutathione to form glutathione and D-lactic acid. The chain is Hydroxyacylglutathione hydrolase from Haemophilus influenzae (strain ATCC 51907 / DSM 11121 / KW20 / Rd).